The following is a 578-amino-acid chain: PX domain-containing protein kinase-like protein (578 aa).

In terms of domain architecture, PX spans 14-126 (LDDTVPLTAA…KFLDPNNYSA (113 aa)). The 394-residue stretch at 88–481 (FIAERQKGLQ…LENSEEHSAK (394 aa)) folds into the Protein kinase domain. Basic residues-rich tracts occupy residues 437 to 448 (IHQHRRLTRAQS) and 457 to 469 (KKRK…KSKR). 2 disordered regions span residues 437 to 548 (IHQH…NGMS) and 559 to 578 (FQKG…PKIG). Residues 483 to 513 (SNSNNSAGSGASSPLTSPSSPTPPSTSGISA) show a composition bias toward low complexity. The segment covering 514–530 (LPPPPPPPPPPAAPLPP) has biased composition (pro residues). Residues 548–567 (SRGALLSSIQNFQKGTLRKA) form the WH2 domain. Positions 568 to 578 (KTCDHSAPKIG) are enriched in basic and acidic residues.

The protein belongs to the protein kinase superfamily. Widely expressed in all tissues examined except in heart. Isoform 1 is expressed in high levels in the brain, skeletal muscle, spleen and testis. Isoform 7 expression has yet to be demonstrated.

Its subcellular location is the cytoplasm. It is found in the cell membrane. Its function is as follows. Binds to and modulates brain Na,K-ATPase subunits ATP1B1 and ATP1B3 and may thereby participate in the regulation of electrical excitability and synaptic transmission. May not display kinase activity. This Homo sapiens (Human) protein is PX domain-containing protein kinase-like protein.